Reading from the N-terminus, the 352-residue chain is MRIELLNTPPDAAESRFEEQIRPIRMEDFAGQQRLTDNLKVFISAAKMRGDALDHVLLSGPPGLGKTTLAYIIASEMGSSIKATSGPLLDKAGNLAGLLTGLQKGDILFIDEIHRMPPMVEEYLYSAMEDFRIDIMLDSGPSARAVQLRIEPFTLVGATTRSGLLTSPLRARFGINSRFDYYEPELLTRIIIRASSILGIGIEPDAAAEIAGRSRGTPRIANRLLRRARDFAQVDGISTITRTIAMKTLECLEIDEEGLDEMDKKIMDTIVNKFSGGPVGIASLAVSVGEERDTIEEVYEPYLIQAGYLARTTRGRVATRKAFSRFADHTLLGGNFGGHKGSLPLFDESEAD.

The large ATPase domain (RuvB-L) stretch occupies residues 1–182 (MRIELLNTPP…FGINSRFDYY (182 aa)). Residues I21, R22, G63, K66, T67, T68, 129–131 (EDF), R172, Y182, and R219 each bind ATP. Residue T67 coordinates Mg(2+). Residues 183-253 (EPELLTRIII…IAMKTLECLE (71 aa)) form a small ATPAse domain (RuvB-S) region. A head domain (RuvB-H) region spans residues 256 to 352 (EEGLDEMDKK…LPLFDESEAD (97 aa)). R292, R311, and R316 together coordinate DNA.

It belongs to the RuvB family. Homohexamer. Forms an RuvA(8)-RuvB(12)-Holliday junction (HJ) complex. HJ DNA is sandwiched between 2 RuvA tetramers; dsDNA enters through RuvA and exits via RuvB. An RuvB hexamer assembles on each DNA strand where it exits the tetramer. Each RuvB hexamer is contacted by two RuvA subunits (via domain III) on 2 adjacent RuvB subunits; this complex drives branch migration. In the full resolvosome a probable DNA-RuvA(4)-RuvB(12)-RuvC(2) complex forms which resolves the HJ.

It localises to the cytoplasm. It catalyses the reaction ATP + H2O = ADP + phosphate + H(+). Its function is as follows. The RuvA-RuvB-RuvC complex processes Holliday junction (HJ) DNA during genetic recombination and DNA repair, while the RuvA-RuvB complex plays an important role in the rescue of blocked DNA replication forks via replication fork reversal (RFR). RuvA specifically binds to HJ cruciform DNA, conferring on it an open structure. The RuvB hexamer acts as an ATP-dependent pump, pulling dsDNA into and through the RuvAB complex. RuvB forms 2 homohexamers on either side of HJ DNA bound by 1 or 2 RuvA tetramers; 4 subunits per hexamer contact DNA at a time. Coordinated motions by a converter formed by DNA-disengaged RuvB subunits stimulates ATP hydrolysis and nucleotide exchange. Immobilization of the converter enables RuvB to convert the ATP-contained energy into a lever motion, pulling 2 nucleotides of DNA out of the RuvA tetramer per ATP hydrolyzed, thus driving DNA branch migration. The RuvB motors rotate together with the DNA substrate, which together with the progressing nucleotide cycle form the mechanistic basis for DNA recombination by continuous HJ branch migration. Branch migration allows RuvC to scan DNA until it finds its consensus sequence, where it cleaves and resolves cruciform DNA. The chain is Holliday junction branch migration complex subunit RuvB from Chlorobium chlorochromatii (strain CaD3).